The primary structure comprises 297 residues: Large ribosomal subunit protein uL15m (297 aa).

The transit peptide at 1–21 directs the protein to the mitochondrion; it reads MSGNGVHGVHGALQLLRSLPK. A disordered region spans residues 23–69; that stretch reads SLANLRPNPGSKKPERRRGRGRYRGRKCGRGHKGERQRGNRPRLGFE. Basic residues predominate over residues 36 to 53; the sequence is PERRRGRGRYRGRKCGRG.

Belongs to the universal ribosomal protein uL15 family. As to quaternary structure, component of the mitochondrial ribosome large subunit (39S) which comprises a 16S rRNA and about 50 distinct proteins.

The protein resides in the mitochondrion. The protein is Large ribosomal subunit protein uL15m (MRPL15) of Gallus gallus (Chicken).